A 130-amino-acid polypeptide reads, in one-letter code: Small ribosomal subunit protein uS9 (130 aa).

Belongs to the universal ribosomal protein uS9 family.

The protein is Small ribosomal subunit protein uS9 of Thioalkalivibrio sulfidiphilus (strain HL-EbGR7).